The primary structure comprises 243 residues: Peptidyl-tRNA hydrolase (243 aa).

Tyr14 is a binding site for tRNA. His19 functions as the Proton acceptor in the catalytic mechanism. The tRNA site is built by Phe64, Asn66, and Asn112. Residues 188 to 243 form a disordered region; it reads GGKAEEEKPRKDNKTTEKKPAGQSHIHQARNHNQPKVLTTGPMADILKKMFGNKGE. Basic and acidic residues predominate over residues 190–207; sequence KAEEEKPRKDNKTTEKKP.

It belongs to the PTH family. As to quaternary structure, monomer.

Its subcellular location is the cytoplasm. It carries out the reaction an N-acyl-L-alpha-aminoacyl-tRNA + H2O = an N-acyl-L-amino acid + a tRNA + H(+). In terms of biological role, hydrolyzes ribosome-free peptidyl-tRNAs (with 1 or more amino acids incorporated), which drop off the ribosome during protein synthesis, or as a result of ribosome stalling. Its function is as follows. Catalyzes the release of premature peptidyl moieties from peptidyl-tRNA molecules trapped in stalled 50S ribosomal subunits, and thus maintains levels of free tRNAs and 50S ribosomes. The chain is Peptidyl-tRNA hydrolase from Rhizobium leguminosarum bv. trifolii (strain WSM2304).